Reading from the N-terminus, the 197-residue chain is Phosphoheptose isomerase (197 aa).

The 158-residue stretch at 40-197 (CIASIAQGGK…LVEHSIFGKQ (158 aa)) folds into the SIS domain. Position 55–57 (55–57 (NGG)) interacts with substrate. Zn(2+)-binding residues include histidine 64 and glutamate 68. Substrate contacts are provided by residues glutamate 68, 97-98 (ND), 123-125 (STS), serine 128, and glutamine 175. Zn(2+) contacts are provided by glutamine 175 and histidine 183.

It belongs to the SIS family. GmhA subfamily. In terms of assembly, homotetramer. Zn(2+) serves as cofactor.

It localises to the cytoplasm. The enzyme catalyses 2 D-sedoheptulose 7-phosphate = D-glycero-alpha-D-manno-heptose 7-phosphate + D-glycero-beta-D-manno-heptose 7-phosphate. It participates in carbohydrate biosynthesis; D-glycero-D-manno-heptose 7-phosphate biosynthesis; D-glycero-alpha-D-manno-heptose 7-phosphate and D-glycero-beta-D-manno-heptose 7-phosphate from sedoheptulose 7-phosphate: step 1/1. The protein operates within capsule biogenesis; capsule polysaccharide biosynthesis. Its function is as follows. Catalyzes the isomerization of sedoheptulose 7-phosphate in D-glycero-D-manno-heptose 7-phosphate. The protein is Phosphoheptose isomerase (gmhA) of Burkholderia pseudomallei (strain K96243).